The following is a 2325-amino-acid chain: Protein Ycf2 (2325 aa).

3 disordered regions span residues 168 to 189, 221 to 251, and 947 to 1006; these read SSQL…GTED, TEIE…EMNN, and KRKK…KRKE. Residues 230-240 are compositionally biased toward low complexity; that stretch reads KGLSGSSSKSR. 2 stretches are compositionally biased toward basic and acidic residues: residues 241-250 and 955-1004; these read LFTEGEKEMN and KRKE…PEKR. Residue 1436–1443 coordinates ATP; sequence GSIGSGRS. Disordered regions lie at residues 1510–1529, 1855–1996, and 2063–2179; these read YEDR…DYEP, LVGS…LLRP, and PAEE…DGFS. The span at 1861–1976 shows a compositional bias: acidic residues; that stretch reads TEEEVEGTEE…VEGTEDEEGE (116 aa). Over residues 1977 to 1989 the composition is skewed to basic and acidic residues; it reads GTEKDSSQFDNDR. 2 stretches are compositionally biased toward acidic residues: residues 2063-2080 and 2087-2162; these read PAEE…EALE and GEEE…ENDS.

This sequence belongs to the Ycf2 family.

It is found in the plastid. The protein localises to the chloroplast stroma. In terms of biological role, probable ATPase of unknown function. Its presence in a non-photosynthetic plant (Epifagus virginiana) and experiments in tobacco indicate that it has an essential function which is probably not related to photosynthesis. The polypeptide is Protein Ycf2 (Oenothera biennis (German evening primrose)).